Consider the following 140-residue polypeptide: Large ribosomal subunit protein uL11 (140 aa).

It belongs to the universal ribosomal protein uL11 family. Part of the ribosomal stalk of the 50S ribosomal subunit. Interacts with L10 and the large rRNA to form the base of the stalk. L10 forms an elongated spine to which L12 dimers bind in a sequential fashion forming a multimeric L10(L12)X complex. One or more lysine residues are methylated.

Functionally, forms part of the ribosomal stalk which helps the ribosome interact with GTP-bound translation factors. This is Large ribosomal subunit protein uL11 from Geobacter sp. (strain M21).